A 468-amino-acid polypeptide reads, in one-letter code: ATP synthase subunit beta 3 (468 aa).

155 to 162 (GGAGVGKT) contributes to the ATP binding site.

Belongs to the ATPase alpha/beta chains family. F-type ATPases have 2 components, CF(1) - the catalytic core - and CF(0) - the membrane proton channel. CF(1) has five subunits: alpha(3), beta(3), gamma(1), delta(1), epsilon(1). CF(0) has three main subunits: a(1), b(2) and c(9-12). The alpha and beta chains form an alternating ring which encloses part of the gamma chain. CF(1) is attached to CF(0) by a central stalk formed by the gamma and epsilon chains, while a peripheral stalk is formed by the delta and b chains.

The protein localises to the cell inner membrane. The catalysed reaction is ATP + H2O + 4 H(+)(in) = ADP + phosphate + 5 H(+)(out). In terms of biological role, produces ATP from ADP in the presence of a proton gradient across the membrane. The catalytic sites are hosted primarily by the beta subunits. This chain is ATP synthase subunit beta 3, found in Syntrophotalea carbinolica (strain DSM 2380 / NBRC 103641 / GraBd1) (Pelobacter carbinolicus).